Consider the following 80-residue polypeptide: Cell division protein ZapB (80 aa).

Residues 3–80 adopt a coiled-coil conformation; the sequence is FEVFEKLESK…ALLGKMEDVQ (78 aa).

Belongs to the ZapB family. Homodimer. The ends of the coiled-coil dimer bind to each other, forming polymers. Interacts with FtsZ.

The protein localises to the cytoplasm. Non-essential, abundant cell division factor that is required for proper Z-ring formation. It is recruited early to the divisome by direct interaction with FtsZ, stimulating Z-ring assembly and thereby promoting cell division earlier in the cell cycle. Its recruitment to the Z-ring requires functional FtsA or ZipA. The sequence is that of Cell division protein ZapB from Proteus mirabilis (strain HI4320).